Here is a 372-residue protein sequence, read N- to C-terminus: MKIGIPKEIKNNENRVAITPAGVMTLVKAGHEVYVETEGGAGSGFSDSEYEKAGAADRCRTWRDAWTAEMVLKVKEPLAREFRYFRPGLILFTYLHLAAAERVTKAVVEQKVVGIAYETVQLANGSLPLLTPMSEVAGRMSVQVGAQFLEKPHGGKGILLGGVPGVRRGKVTIIGGGTAGTNAAKIGVGLGADVTILDINAERLRELDDLFGDHVTTLMSNSYHIAECVRESDLVVGAVLIPGAKAKLVTEEMVRSMTPGSVLVDIAIDQGGIFETTDRVTTHDDPTYVKHGVVHYAVANMPGAVPRTSTFALTNVTIPYALQIANKGYRAGCLDNPALLKGINTLDGHIVYEAVAAAHNMPYTDVHSLLHG.

Residues Arg-15 and Lys-75 each contribute to the substrate site. The active-site Proton donor/acceptor is the His-96. NAD(+)-binding positions include Ser-134, 178–179 (TA), Asp-198, Ser-220, 239–240 (VL), 266–269 (IAID), Arg-279, and 298–301 (VANM). Asp-269 serves as the catalytic Proton donor/acceptor.

This sequence belongs to the AlaDH/PNT family. Homohexamer.

It localises to the cytoplasm. It carries out the reaction L-alanine + NAD(+) + H2O = pyruvate + NH4(+) + NADH + H(+). The protein operates within amino-acid degradation; L-alanine degradation via dehydrogenase pathway; NH(3) and pyruvate from L-alanine: step 1/1. Functionally, catalyzes the reversible reductive amination of pyruvate to L-alanine. A key factor in the assimilation of L-alanine as an energy source via the tricarboxylic acid cycle during sporulation. This Geobacillus stearothermophilus (Bacillus stearothermophilus) protein is Alanine dehydrogenase (ald).